We begin with the raw amino-acid sequence, 118 residues long: Large ribosomal subunit protein bL20c (118 aa).

Belongs to the bacterial ribosomal protein bL20 family.

The protein resides in the plastid. Its function is as follows. Binds directly to 23S ribosomal RNA and is necessary for the in vitro assembly process of the 50S ribosomal subunit. It is not involved in the protein synthesizing functions of that subunit. This is Large ribosomal subunit protein bL20c (rpl20) from Cuscuta reflexa (Southern Asian dodder).